The following is a 324-amino-acid chain: Glyoxylate/hydroxypyruvate reductase B (324 aa).

Active-site residues include R237 and E266. H285 (proton donor) is an active-site residue.

This sequence belongs to the D-isomer specific 2-hydroxyacid dehydrogenase family. GhrB subfamily. As to quaternary structure, homodimer.

It localises to the cytoplasm. It carries out the reaction glycolate + NADP(+) = glyoxylate + NADPH + H(+). It catalyses the reaction (R)-glycerate + NAD(+) = 3-hydroxypyruvate + NADH + H(+). The enzyme catalyses (R)-glycerate + NADP(+) = 3-hydroxypyruvate + NADPH + H(+). In terms of biological role, catalyzes the NADPH-dependent reduction of glyoxylate and hydroxypyruvate into glycolate and glycerate, respectively. The protein is Glyoxylate/hydroxypyruvate reductase B of Shigella boydii serotype 4 (strain Sb227).